The sequence spans 758 residues: Xaa-Pro dipeptidyl-peptidase (758 aa).

Active-site charge relay system residues include Ser-349, Asp-469, and His-499.

Belongs to the peptidase S15 family. In terms of assembly, homodimer.

Its subcellular location is the cytoplasm. The catalysed reaction is Hydrolyzes Xaa-Pro-|- bonds to release unblocked, N-terminal dipeptides from substrates including Ala-Pro-|-p-nitroanilide and (sequentially) Tyr-Pro-|-Phe-Pro-|-Gly-Pro-|-Ile.. Removes N-terminal dipeptides sequentially from polypeptides having unsubstituted N-termini provided that the penultimate residue is proline. The polypeptide is Xaa-Pro dipeptidyl-peptidase (Streptococcus uberis (strain ATCC BAA-854 / 0140J)).